The sequence spans 88 residues: MVKCSISSIGNVKSISKSNNLSSLSNSSSSLQSMNSIQCGGGCGNGGLLGGVGGLVGGVLVGTGVIVGSVLHGVGSILTGGSNNCGCN.

Belongs to the hssA/B family.

The polypeptide is HssA/B-like protein 19 (hssl19) (Dictyostelium discoideum (Social amoeba)).